The following is a 48-amino-acid chain: MAKFEEAENRMFNIKICLKCNARNPATAKSCRKCGYTGLRFKAKEPRG.

It belongs to the eukaryotic ribosomal protein eL40 family.

The protein is Large ribosomal subunit protein eL40 of Methanosphaera stadtmanae (strain ATCC 43021 / DSM 3091 / JCM 11832 / MCB-3).